The following is a 748-amino-acid chain: Rho GTPase-activating protein 24 (748 aa).

The interval 1–20 is disordered; it reads MEENNDSTENPQQGQGRQNA. The segment covering 7-18 has biased composition (polar residues); that stretch reads STENPQQGQGRQ. In terms of domain architecture, PH spans 19 to 125; it reads NAIKCGWLRK…WVKSIRRVIW (107 aa). Positions 135–329 constitute a Rho-GAP domain; the sequence is QKLEDTVRYE…VMISKHDCLF (195 aa). Disordered stretches follow at residues 354 to 476 and 582 to 641; these read TMGQ…GTHS and DFFG…SSNH. Composition is skewed to polar residues over residues 356–374 and 382–405; these read GQLQ…SRQC and PQRS…SPKN. 8 positions are modified to phosphoserine: Ser-369, Ser-391, Ser-396, Ser-398, Ser-402, Ser-413, Ser-415, and Ser-437. Residues 432–476 are compositionally biased toward polar residues; the sequence is IVTNGSFSSSNAEGLEKTQTTPNGSLQARRSSSLKVSGTKMGTHS. Phosphothreonine is present on Thr-452. Residues 600–615 are compositionally biased toward basic and acidic residues; it reads DLSHPRDYESKSDHRS. A compositionally biased stretch (low complexity) spans 617–641; the sequence is GGRSSRATSSSDNSETFVGNSSSNH. Residues 649-729 adopt a coiled-coil conformation; it reads SSLKQEMTKQ…KEMEQFFSTF (81 aa).

In terms of assembly, interacts with FLNA. In terms of processing, phosphorylated by ROCK, leading to activate the RacGAP activity. In terms of tissue distribution, isoform 1 is widely expressed with a higher level in kidney. Isoform 2 is mainly expressed in endothelial cells.

The protein resides in the cytoplasm. It is found in the cytoskeleton. It localises to the cell junction. Its subcellular location is the adherens junction. The protein localises to the focal adhesion. The protein resides in the cell projection. Its function is as follows. Rho GTPase-activating protein involved in cell polarity, cell morphology and cytoskeletal organization. Acts as a GTPase activator for the Rac-type GTPase by converting it to an inactive GDP-bound state. Controls actin remodeling by inactivating Rac downstream of Rho leading to suppress leading edge protrusion and promotes cell retraction to achieve cellular polarity. Able to suppress RAC1 and CDC42 activity in vitro. Overexpression induces cell rounding with partial or complete disruption of actin stress fibers and formation of membrane ruffles, lamellipodia, and filopodia. Isoform 2 is a vascular cell-specific GAP involved in modulation of angiogenesis. This Homo sapiens (Human) protein is Rho GTPase-activating protein 24 (ARHGAP24).